Reading from the N-terminus, the 280-residue chain is Eukaryotic translation initiation factor 3 subunit F-1 (280 aa).

The MPN domain occupies 8-138 (VRVHPVVLFQ…LRSYVCIQLG (131 aa)).

It belongs to the eIF-3 subunit F family. As to quaternary structure, component of the eukaryotic translation initiation factor 3 (eIF-3) complex. The eIF-3 complex interacts with pix.

Its subcellular location is the cytoplasm. In terms of biological role, component of the eukaryotic translation initiation factor 3 (eIF-3) complex, which is involved in protein synthesis of a specialized repertoire of mRNAs and, together with other initiation factors, stimulates binding of mRNA and methionyl-tRNAi to the 40S ribosome. The eIF-3 complex specifically targets and initiates translation of a subset of mRNAs involved in cell proliferation. The protein is Eukaryotic translation initiation factor 3 subunit F-1 of Drosophila persimilis (Fruit fly).